The sequence spans 178 residues: MAELTTLARPYAKAAFEHAQAHQQLASWSAMLGLAAAVSQDDTMQRVLKAPRLTSAEKASTFIEVCGDKFDAQAQNFIHVAAENDRLLLLPEISALFDLYKAEQEKSVDVDVTSAFALNQEQQDKLAKVLSARLGREVRLHAAEDASLIGGVVIRAGDLVIDGSIRGKLANLAEALKS.

The protein belongs to the ATPase delta chain family. In terms of assembly, F-type ATPases have 2 components, F(1) - the catalytic core - and F(0) - the membrane proton channel. F(1) has five subunits: alpha(3), beta(3), gamma(1), delta(1), epsilon(1). F(0) has three main subunits: a(1), b(2) and c(10-14). The alpha and beta chains form an alternating ring which encloses part of the gamma chain. F(1) is attached to F(0) by a central stalk formed by the gamma and epsilon chains, while a peripheral stalk is formed by the delta and b chains.

Its subcellular location is the cell inner membrane. Functionally, f(1)F(0) ATP synthase produces ATP from ADP in the presence of a proton or sodium gradient. F-type ATPases consist of two structural domains, F(1) containing the extramembraneous catalytic core and F(0) containing the membrane proton channel, linked together by a central stalk and a peripheral stalk. During catalysis, ATP synthesis in the catalytic domain of F(1) is coupled via a rotary mechanism of the central stalk subunits to proton translocation. This protein is part of the stalk that links CF(0) to CF(1). It either transmits conformational changes from CF(0) to CF(1) or is implicated in proton conduction. The sequence is that of ATP synthase subunit delta from Pseudomonas fluorescens (strain ATCC BAA-477 / NRRL B-23932 / Pf-5).